The following is a 101-amino-acid chain: uncharacterized protein (101 aa).

This is an uncharacterized protein from Methanocaldococcus jannaschii (strain ATCC 43067 / DSM 2661 / JAL-1 / JCM 10045 / NBRC 100440) (Methanococcus jannaschii).